We begin with the raw amino-acid sequence, 300 residues long: Probable alpha-L-glutamate ligase (300 aa).

Positions Leu-104 to Glu-287 constitute an ATP-grasp domain. ATP contacts are provided by residues Lys-141, Glu-178 to Tyr-179, Asp-187, and Arg-211 to Asn-213. The Mg(2+) site is built by Asp-248, Glu-260, and Asn-262. Asp-248, Glu-260, and Asn-262 together coordinate Mn(2+).

This sequence belongs to the RimK family. Mg(2+) is required as a cofactor. It depends on Mn(2+) as a cofactor.

This is Probable alpha-L-glutamate ligase from Enterobacter sp. (strain 638).